A 344-amino-acid chain; its full sequence is Meiotic recombination protein DMC1 homolog B (344 aa).

133–140 (GEFRSGKT) is an ATP binding site. Arginine 235 contributes to the dsDNA binding site. SsDNA is bound by residues arginine 235, phenylalanine 238, arginine 241, arginine 247, and arginine 315. Residues arginine 241 and arginine 247 each coordinate dsDNA.

It belongs to the RecA family. DMC1 subfamily. In terms of tissue distribution, highly expressed in spikelets. Expressed in meiotic young panicles.

It is found in the nucleus. Recombinase that may participate in meiotic recombination, specifically in homologous strand assimilation, which is required for the resolution of meiotic double-strand breaks. Exhibits DNA-dependent ATPase activity when bound to single-stranded DNA (ssDNA). Mediates renaturation of homologous complementary strands as well as assimilation of single strands into homologous supercoiled duplexes leading to D-loop formation. Binds circular single-stranded DNA (ssDNA) and circular double-stranded DNA (dsDNA) in vitro. Catalyzes DNA homologous renaturation and DNA strand exchange. The rates of these activities are dependent on the state of ATP hydrolysis. Forms helical filaments along ssDNA and dsDNA, and promotes strand exchange between ssDNA and dsDNA with long DNA substrates of several thousand base pairs. The presence of the replication protein A is not required for this activity. Seems to be required for homologous pairing and subsequent chromosome segregation during male meiosis. May be not directly required for homologous pairing during male meiosis. Required for synaptonemal complex assembly and crossover formation. Functions redundantly with DMC1A. The protein is Meiotic recombination protein DMC1 homolog B of Oryza sativa subsp. japonica (Rice).